A 127-amino-acid polypeptide reads, in one-letter code: Evasin P467 (127 aa).

The signal sequence occupies residues 1–21; it reads MALKACITVIAVVYVVQVVRG. 4 disulfide bridges follow: C42-C63, C59-C100, C76-C105, and C95-C114. Residues N49 and N94 are each glycosylated (N-linked (GlcNAc...) asparagine).

Its subcellular location is the secreted. Functionally, salivary chemokine-binding protein which binds to host chemokines CCL1, CCL2, CCL3 and CCL5. This chain is Evasin P467, found in Rhipicephalus pulchellus (Yellow backed tick).